The chain runs to 296 residues: HTH-type transcriptional regulator IlvR (296 aa).

The 58-residue stretch at Met-1–Thr-58 folds into the HTH lysR-type domain. Positions Phe-18–Gln-37 form a DNA-binding region, H-T-H motif.

The protein belongs to the LysR transcriptional regulatory family.

Functionally, positively regulates the expression of the ilvD gene while negatively autoregulating its own expression. This chain is HTH-type transcriptional regulator IlvR (ilvR), found in Caulobacter vibrioides (strain ATCC 19089 / CIP 103742 / CB 15) (Caulobacter crescentus).